We begin with the raw amino-acid sequence, 170 residues long: Metalloproteinase inhibitor 4 (170 aa).

An NTR domain is found at 1–105 (ISSEKVVPAS…SLNHHYHLNC (105 aa)). 2 involved in metalloproteinase-binding regions span residues 6–9 (VVPA) and 48–49 (SS). 3 disulfide bridges follow: Cys-107-Cys-154, Cys-112-Cys-117, and Cys-125-Cys-146.

This sequence belongs to the protease inhibitor I35 (TIMP) family.

The protein localises to the secreted. In terms of biological role, complexes with metalloproteinases (such as collagenases) and irreversibly inactivates them by binding to their catalytic zinc cofactor. The sequence is that of Metalloproteinase inhibitor 4 (TIMP4) from Oryctolagus cuniculus (Rabbit).